The primary structure comprises 208 residues: NAD(P)H-quinone oxidoreductase subunit I (208 aa).

2 4Fe-4S ferredoxin-type domains span residues 55-84 and 95-124; these read GRIH…VDWV and RNYS…MTEE. Positions 64, 67, 70, 74, 104, 107, 110, and 114 each coordinate [4Fe-4S] cluster.

The protein belongs to the complex I 23 kDa subunit family. As to quaternary structure, NDH-1 is composed of at least 11 different subunits. Requires [4Fe-4S] cluster as cofactor.

Its subcellular location is the cellular thylakoid membrane. The catalysed reaction is a plastoquinone + NADH + (n+1) H(+)(in) = a plastoquinol + NAD(+) + n H(+)(out). It catalyses the reaction a plastoquinone + NADPH + (n+1) H(+)(in) = a plastoquinol + NADP(+) + n H(+)(out). NDH-1 shuttles electrons from an unknown electron donor, via FMN and iron-sulfur (Fe-S) centers, to quinones in the respiratory and/or the photosynthetic chain. The immediate electron acceptor for the enzyme in this species is believed to be plastoquinone. Couples the redox reaction to proton translocation, and thus conserves the redox energy in a proton gradient. This is NAD(P)H-quinone oxidoreductase subunit I from Prochlorococcus marinus subsp. pastoris (strain CCMP1986 / NIES-2087 / MED4).